The following is a 242-amino-acid chain: Mannose-P-dolichol utilization defect 1 protein homolog (242 aa).

In terms of domain architecture, PQ-loop 1 spans Leu37–Phe95. 7 helical membrane-spanning segments follow: residues Gly40 to Ile60, Gly68 to Ser88, Trp98 to Phe118, Gly120 to Val140, Thr148 to Ile168, Leu180 to Val200, and Leu207 to Phe227. A PQ-loop 2 domain is found at Val152–Asp202.

Belongs to the MPDU1 (TC 2.A.43.3) family.

The protein localises to the membrane. The protein is Mannose-P-dolichol utilization defect 1 protein homolog of Caenorhabditis elegans.